The sequence spans 207 residues: Probable glutathione S-transferase 5 (207 aa).

A GST N-terminal domain is found at V2–G81. Residues Y8, W39, K43, G51–L53, and Q65–S66 each bind glutathione. The GST C-terminal domain occupies T83–F207.

It belongs to the GST superfamily. Sigma family.

The enzyme catalyses RX + glutathione = an S-substituted glutathione + a halide anion + H(+). Its function is as follows. Conjugation of reduced glutathione to a wide number of exogenous and endogenous hydrophobic electrophiles. May play a role in the detoxification of reactive oxygen species produced during pathogenic bacterial infection. The polypeptide is Probable glutathione S-transferase 5 (gst-5) (Caenorhabditis elegans).